Consider the following 179-residue polypeptide: Large ribosomal subunit protein uL5 (179 aa).

This sequence belongs to the universal ribosomal protein uL5 family. In terms of assembly, part of the 50S ribosomal subunit; part of the 5S rRNA/L5/L18/L25 subcomplex. Contacts the 5S rRNA and the P site tRNA. Forms a bridge to the 30S subunit in the 70S ribosome.

Its function is as follows. This is one of the proteins that bind and probably mediate the attachment of the 5S RNA into the large ribosomal subunit, where it forms part of the central protuberance. In the 70S ribosome it contacts protein S13 of the 30S subunit (bridge B1b), connecting the 2 subunits; this bridge is implicated in subunit movement. Contacts the P site tRNA; the 5S rRNA and some of its associated proteins might help stabilize positioning of ribosome-bound tRNAs. The polypeptide is Large ribosomal subunit protein uL5 (Citrifermentans bemidjiense (strain ATCC BAA-1014 / DSM 16622 / JCM 12645 / Bem) (Geobacter bemidjiensis)).